The sequence spans 453 residues: Ribosome biogenesis protein YTM1 (453 aa).

A ubiquitin-like (UBL) domain region spans residues 8-89 (VKLRFFTREQ…ETFLNVEYTR (82 aa)). The segment at 99-453 (SFSNEDWVSS…INKGDNIFKS (355 aa)) is sufficient for interaction with ERB1 and association with 66S pre-ribosomes. WD repeat units lie at residues 101–139 (SNED…EKQY), 141–179 (GHSA…LKQP), 199–237 (GHKA…MTVV), 278–318 (SHTG…CIDT), 320–359 (TTSY…TSKI), 366–406 (GHKN…PMYT), and 417–453 (GVND…IFKS).

It belongs to the WD repeat WDR12/YTM1 family. Component of the NOP7 complex, composed of ERB1, NOP7 and YTM1. The complex is held together by ERB1, which interacts with NOP7 via its N-terminal domain and with YTM1 via a high-affinity interaction between the seven-bladed beta-propeller domains of the 2 proteins. The NOP7 complex associates with the 66S pre-ribosome. Interacts (via UBL domain) with MDN1 (via VWFA/MIDAS domain).

It is found in the nucleus. The protein resides in the nucleolus. Its subcellular location is the nucleoplasm. Its function is as follows. Component of the NOP7 complex, which is required for maturation of the 25S and 5.8S ribosomal RNAs and formation of the 60S ribosome. In Vanderwaltozyma polyspora (strain ATCC 22028 / DSM 70294 / BCRC 21397 / CBS 2163 / NBRC 10782 / NRRL Y-8283 / UCD 57-17) (Kluyveromyces polysporus), this protein is Ribosome biogenesis protein YTM1.